The sequence spans 1407 residues: DNA-directed RNA polymerase subunit beta' (1407 aa).

4 residues coordinate Zn(2+): Cys-70, Cys-72, Cys-85, and Cys-88. 3 residues coordinate Mg(2+): Asp-460, Asp-462, and Asp-464. Zn(2+) is bound by residues Cys-814, Cys-888, Cys-895, and Cys-898.

The protein belongs to the RNA polymerase beta' chain family. As to quaternary structure, the RNAP catalytic core consists of 2 alpha, 1 beta, 1 beta' and 1 omega subunit. When a sigma factor is associated with the core the holoenzyme is formed, which can initiate transcription. Mg(2+) serves as cofactor. Requires Zn(2+) as cofactor.

It carries out the reaction RNA(n) + a ribonucleoside 5'-triphosphate = RNA(n+1) + diphosphate. Its function is as follows. DNA-dependent RNA polymerase catalyzes the transcription of DNA into RNA using the four ribonucleoside triphosphates as substrates. The chain is DNA-directed RNA polymerase subunit beta' from Cronobacter sakazakii (strain ATCC BAA-894) (Enterobacter sakazakii).